A 608-amino-acid chain; its full sequence is Albumin (608 aa).

The first 18 residues, Met-1–Ser-18, serve as a signal peptide directing secretion. The propeptide occupies Arg-19–Arg-24. Albumin domains follow at residues Arg-19 to Glu-210, Gly-211 to Pro-403, and Leu-404 to Glu-601. His-27 is a binding site for Cu cation. Ser-29 carries the phosphoserine modification. Glu-30 and Asp-37 together coordinate Ca(2+). Residues Cys-77 and Cys-86 are joined by a disulfide bond. Ser-82 and Ser-89 each carry phosphoserine. His-91 contributes to the Zn(2+) binding site. Cystine bridges form between Cys-99/Cys-115, Cys-114/Cys-125, Cys-148/Cys-193, Cys-192/Cys-201, Cys-224/Cys-270, and Cys-269/Cys-277. Phosphothreonine is present on Thr-107. Lys-229 carries the N6-succinyllysine modification. Glu-268 lines the Ca(2+) pocket. Zn(2+)-binding residues include His-271 and Asp-273. Ca(2+) is bound by residues Asp-273, Glu-276, Asp-279, and Asp-283. Intrachain disulfides connect Cys-289-Cys-303, Cys-302-Cys-313, Cys-340-Cys-385, Cys-384-Cys-393, Cys-416-Cys-462, Cys-461-Cys-472, Cys-485-Cys-501, and Cys-500-Cys-511. Position 297 is a phosphoserine (Ser-297). The residue at position 443 (Ser-443) is a Phosphoserine. 2 positions are modified to phosphothreonine: Thr-444 and Thr-446. At Lys-460 the chain carries N6-succinyllysine. A Phosphoserine modification is found at Ser-513. 2 disulfide bridges follow: Cys-538-Cys-583 and Cys-582-Cys-591. Lys-558 is modified (N6-methyllysine). At Thr-570 the chain carries Phosphothreonine. Lys-588 carries the post-translational modification N6-succinyllysine.

Belongs to the ALB/AFP/VDB family. As to quaternary structure, interacts with FCGRT; this interaction regulates ALB homeostasis. Interacts with TASOR. In plasma, occurs in a covalently-linked complex with chromophore-bound alpha-1-microglobulin; this interaction does not prevent fatty acid binding to ALB. In terms of processing, phosphorylated by FAM20C in the extracellular medium. As to expression, plasma.

It is found in the secreted. In terms of biological role, binds water, Ca(2+), Na(+), K(+), fatty acids, hormones, bilirubin and drugs. Its main function is the regulation of the colloidal osmotic pressure of blood. Major zinc transporter in plasma, typically binds about 80% of all plasma zinc. Major calcium and magnesium transporter in plasma, binds approximately 45% of circulating calcium and magnesium in plasma. Potentially has more than two calcium-binding sites and might additionally bind calcium in a non-specific manner. The shared binding site between zinc and calcium at residue Asp-273 suggests a crosstalk between zinc and calcium transport in the blood. The rank order of affinity is zinc &gt; calcium &gt; magnesium. Binds to the bacterial siderophore enterobactin and inhibits enterobactin-mediated iron uptake of E.coli from ferric transferrin, and may thereby limit the utilization of iron and growth of enteric bacteria such as E.coli. Does not prevent iron uptake by the bacterial siderophore aerobactin. This is Albumin (ALB) from Oryctolagus cuniculus (Rabbit).